The primary structure comprises 178 residues: Large ribosomal subunit protein uL6 (178 aa).

The protein belongs to the universal ribosomal protein uL6 family. Part of the 50S ribosomal subunit.

Functionally, this protein binds to the 23S rRNA, and is important in its secondary structure. It is located near the subunit interface in the base of the L7/L12 stalk, and near the tRNA binding site of the peptidyltransferase center. This chain is Large ribosomal subunit protein uL6, found in Desulfatibacillum aliphaticivorans.